The sequence spans 336 residues: uncharacterized protein (336 aa).

The protein to bacterial alkanal monooxygenase alpha and beta chains.

This is an uncharacterized protein from Bacillus subtilis (strain 168).